Here is a 522-residue protein sequence, read N- to C-terminus: Cytochrome b mRNA maturase bI3 (522 aa).

The Mitochondrial matrix segment spans residues 1–31; that stretch reads MTIRKSNPYLSLVNSYLMDSPQPSSMNYWWN. The interval 1 to 163 is cytochrome b; it reads MTIRKSNPYL…MPFMGGDLVP (163 aa). Residues 32 to 52 form a helical membrane-spanning segment; that stretch reads VGSLLGLCLVMQMASGMFLAM. Residues 53–84 are Mitochondrial intermembrane-facing; it reads HYSSSMELAFNSVEHMMRDVNAGWLMRYIHAN. Residues 85-105 form a helical membrane-spanning segment; sequence GASFFFMCLYLHMGKALYYGS. The Mitochondrial matrix portion of the chain corresponds to 106 to 110; sequence YKSPR. Residues 111–131 form a helical membrane-spanning segment; that stretch reads VLVWSMGVMMFMLTMATAFMG. At 132–154 the chain is on the mitochondrial intermembrane side; it reads YCLVYGQMSHWGATVITNLLSAM. The chain crosses the membrane as a helical span at residues 155-175; it reads PFMGGDLVPLSIILSLYLLYI. Positions 164 to 522 are maturase; that stretch reads LSIILSLYLL…PYMSWHQKEQ (359 aa). Topologically, residues 176 to 522 are mitochondrial matrix; that stretch reads SLKTFMKMIF…PYMSWHQKEQ (347 aa).

The protein in the N-terminal section; belongs to the cytochrome b family. This sequence in the C-terminal section; belongs to the LAGLIDADG endonuclease family.

It localises to the mitochondrion inner membrane. Functionally, mitochondrial mRNA maturase required for splicing of intron 3 of the cytochrome b (COB) gene, containing its own coding sequence. This chain is Cytochrome b mRNA maturase bI3 (bI3), found in Debaryomyces hansenii (strain ATCC 36239 / CBS 767 / BCRC 21394 / JCM 1990 / NBRC 0083 / IGC 2968) (Yeast).